The primary structure comprises 285 residues: Shikimate dehydrogenase (NADP(+)) (285 aa).

Shikimate-binding positions include 20–22 (SRS) and T67. K71 acts as the Proton acceptor in catalysis. 2 residues coordinate shikimate: N93 and D108. Residues 132-136 (GAGGA) and M224 contribute to the NADP(+) site. Y226 serves as a coordination point for shikimate. G248 contacts NADP(+).

This sequence belongs to the shikimate dehydrogenase family. Homodimer.

The catalysed reaction is shikimate + NADP(+) = 3-dehydroshikimate + NADPH + H(+). It functions in the pathway metabolic intermediate biosynthesis; chorismate biosynthesis; chorismate from D-erythrose 4-phosphate and phosphoenolpyruvate: step 4/7. In terms of biological role, involved in the biosynthesis of the chorismate, which leads to the biosynthesis of aromatic amino acids. Catalyzes the reversible NADPH linked reduction of 3-dehydroshikimate (DHSA) to yield shikimate (SA). This Bordetella avium (strain 197N) protein is Shikimate dehydrogenase (NADP(+)).